A 123-amino-acid polypeptide reads, in one-letter code: MSAEVKAAVARYLDAVAGGSPAAIAALYAPDATLEDPVGADLVRGRAAIEEFYGALAGAKVSTELLAVRAVAGHAAFSFRVTTDAGDQQYVVEPIDVMTFDADGQITSMRAFWAPGDMVVTPA.

Tyr12 serves as the catalytic Proton donor. Asp36 (proton acceptor) is an active-site residue. Substrate is bound at residue Asp96.

Homodimer.

The enzyme catalyses a 3-oxo-Delta(5)-steroid = a 3-oxo-Delta(4)-steroid. This is Steroid Delta-isomerase (ksdI) from Nocardioides simplex (Arthrobacter simplex).